The primary structure comprises 608 residues: uncharacterized protein (608 aa).

The helical transmembrane segment at 4 to 24 (LIFMALLMSLLFIGTVFGYGD) threads the bilayer.

This sequence to M.jannaschii MJ1394 and A.fulgidus AF2028.

The protein resides in the membrane. This is an uncharacterized protein from Methanocaldococcus jannaschii (strain ATCC 43067 / DSM 2661 / JAL-1 / JCM 10045 / NBRC 100440) (Methanococcus jannaschii).